The following is a 249-amino-acid chain: MDDRIINFEPLIEGVLIKRYKRFLSDIKLDNGEIVTAHCANTGPMKGLLNEGAKVRISYSSSPKRKLSWTWEQVEVTGINNEKVWVGINTLFANKLIKTVIEKNLLKDKLGDIATIQSEVVYGQDKKSRIDFLLTPKISNPDNRKIFIEVKNTTWKKNKIALFPDTETKRGQKHLIELKGVMPESKSVLVPCITRKDVDFFGPGDEADPIYGDLFRDSIDAGMLLIPCCFEFHKDHITWKGFKPLKLDG.

This sequence belongs to the SfsA family.

The protein is Sugar fermentation stimulation protein homolog of Prochlorococcus marinus (strain MIT 9515).